We begin with the raw amino-acid sequence, 115 residues long: Large ribosomal subunit protein bL19 (115 aa).

It belongs to the bacterial ribosomal protein bL19 family.

In terms of biological role, this protein is located at the 30S-50S ribosomal subunit interface and may play a role in the structure and function of the aminoacyl-tRNA binding site. The polypeptide is Large ribosomal subunit protein bL19 (Streptococcus pyogenes serotype M1).